A 393-amino-acid chain; its full sequence is GDP-4-keto-6-deoxy-D-mannose 3-dehydratase (393 aa).

30–33 (NMFT) serves as a coordination point for GDP-4-dehydro-alpha-D-rhamnose. The chain crosses the membrane as a helical span at residues 53–73 (YSVMVSSGSTANLLMIAALFF). Residues 60–61 (GS), Trp92, Glu166, and Ser187 each bind pyridoxal 5'-phosphate. His192 serves as the catalytic Proton donor/acceptor. Position 219 (His219) interacts with L-glutamate. Arg223 serves as a coordination point for GDP-4-dehydro-alpha-D-rhamnose. Asn252 is a pyridoxal 5'-phosphate binding site. L-glutamate is bound at residue Arg254. Glu333 lines the GDP-4-dehydro-alpha-D-rhamnose pocket.

It belongs to the DegT/DnrJ/EryC1 family. As to quaternary structure, homodimer. Requires pyridoxal 5'-phosphate as cofactor.

The protein resides in the cell membrane. The catalysed reaction is GDP-4-dehydro-alpha-D-rhamnose + L-glutamate = GDP-4-dehydro-3,6-dideoxy-alpha-D-mannose + 2-oxoglutarate + NH4(+). It participates in nucleotide-sugar metabolism; GDP-L-colitose biosynthesis. In terms of biological role, involved in the biosynthesis of L-colitose, a 3,6-dideoxyhexose present in the O-antigen region of lipopolysaccharides (LPS), where it serves as an antigenic determinant and is vital for bacterial defense and survival. Catalyzes the removal of the C3'-hydroxyl group from GDP-4-keto-6-deoxy-D-mannose via a combined transamination-deoxygenation reaction. The catalysis is initiated by a transamination step in which pyridoxal 5'-phosphate (PLP) is converted to pyridoxamine 5'-phosphate (PMP) in the presence of L-glutamate. This coenzyme then forms a Schiff base with GDP-4-keto-6-deoxy-D-mannose and the resulting adduct undergoes a PMP-mediated beta-dehydration reaction to give a sugar enamine intermediate, which after tautomerization and hydrolysis to release ammonia yields GDP-4-keto-3,6-dideoxy-D-mannose as a product. The protein is GDP-4-keto-6-deoxy-D-mannose 3-dehydratase of Yersinia pseudotuberculosis.